The chain runs to 300 residues: Cysteine-rich venom protein (300 aa).

Residues 1-21 (MLSTMQTVGAVLMLSIVLVAG) form the signal peptide. Residues 22–24 (RKR) constitute a propeptide that is removed on maturation. The region spanning 62 to 183 (LEMHNKIRAD…GNNKYFVCNY (122 aa)) is the SCP domain.

Post-translationally, contains 11 disulfide bonds. In terms of tissue distribution, expressed by the venom duct.

The protein localises to the secreted. Its function is as follows. Protease responsible for cleaving the conotoxins from their propeptide precursors. The target propeptide requires minimum four residues including a leucine N-terminal of the cleavage site for efficient substrate processing (example: Xaa-Xaa-Xaa-Leu-Asn-Lys-Arg-toxin). In Conus textile (Cloth-of-gold cone), this protein is Cysteine-rich venom protein.